Here is a 734-residue protein sequence, read N- to C-terminus: Myb-like protein J (734 aa).

3 disordered regions span residues 1–35 (MPNN…FKSN), 128–196 (QKDQ…PTMM), and 221–378 (SPIS…LKQG). The segment covering 131-142 (QQQKEQQKEQQK) has biased composition (basic and acidic residues). Residues 164-173 (TTTTTTTTTT) show a composition bias toward low complexity. Residues 174–196 (AVEQQGAEQQDTNLNSTSSPTMM) are compositionally biased toward polar residues. Residues 221–230 (SPISSSLNNS) are compositionally biased toward low complexity. Positions 231-257 (QDNTKPVSPDNIENTSNPMDTSSSNGK) are enriched in polar residues. A compositionally biased stretch (low complexity) spans 258-372 (TPTITPIVTP…GGKTNPTGKK (115 aa)). Residues 371–426 (KKTSLKQGWTKEEHIRFLNGIQIHGKGAWKEIAQFVGTRTPTQIQSHAQKYYLRQK) enclose the HTH myb-type domain. The segment at residues 399–422 (WKEIAQFVGTRTPTQIQSHAQKYY) is a DNA-binding region (H-T-H motif). A compositionally biased stretch (low complexity) spans 445 to 454 (DDNLNNSNKN). Positions 445 to 623 (DDNLNNSNKN…GNILRHQNSH (179 aa)) are disordered. The segment covering 455 to 468 (NVDKNKQDDKEKKT) has biased composition (basic and acidic residues). The segment covering 469–478 (QKTKKTKSKS) has biased composition (basic residues). 2 stretches are compositionally biased toward low complexity: residues 489 to 543 (QQQQ…SSQT) and 574 to 615 (NNNN…NEGN).

It is found in the nucleus. The polypeptide is Myb-like protein J (mybJ) (Dictyostelium discoideum (Social amoeba)).